Here is a 1346-residue protein sequence, read N- to C-terminus: G-protein coupled receptor-associated sorting protein 1 (1346 aa).

Disordered regions lie at residues methionine 1–glutamate 101, threonine 144–proline 177, and alanine 192–threonine 258. Positions glutamate 21–valine 36 are enriched in low complexity. The span at phenylalanine 211–methionine 226 shows a compositional bias: basic residues. Phosphoserine is present on serine 295. Disordered regions lie at residues glutamate 311–glutamate 399 and valine 461–methionine 485. The segment covering arginine 316–alanine 333 has biased composition (basic residues). Composition is skewed to basic and acidic residues over residues aspartate 347–alanine 361 and lysine 370–glutamate 399. The span at valine 461–serine 484 shows a compositional bias: polar residues. A phosphoserine mark is found at serine 619 and serine 626. Threonine 860 carries the post-translational modification Phosphothreonine. Serine 862 carries the post-translational modification Phosphoserine. Residues alanine 984–tryptophan 1004 form a disordered region. Residues serine 990–serine 1003 show a composition bias toward basic and acidic residues.

The protein belongs to the GPRASP family. Interacts with cytoplasmic tails of a variety of G-protein coupled receptors such as delta opioid receptor/OPRD1, beta-2 adrenergic receptor/ADRB2 and D4 dopamine receptor/DRD4. Interacts with BECN2; the interaction is direct and with D2 dopamine receptor/DRD2. Interacts with PER1. As to expression, expressed in the brain.

The protein localises to the cytoplasm. In terms of biological role, modulates lysosomal sorting and functional down-regulation of a variety of G-protein coupled receptors. Targets receptors for degradation in lysosomes via its interaction with BECN2. This Rattus norvegicus (Rat) protein is G-protein coupled receptor-associated sorting protein 1 (Gprasp1).